A 172-amino-acid chain; its full sequence is 3-hydroxydecanoyl-[acyl-carrier-protein] dehydratase (172 aa).

Residue H71 is part of the active site.

The protein belongs to the thioester dehydratase family. FabA subfamily. Homodimer.

It localises to the cytoplasm. The enzyme catalyses a (3R)-hydroxyacyl-[ACP] = a (2E)-enoyl-[ACP] + H2O. It carries out the reaction (3R)-hydroxydecanoyl-[ACP] = (2E)-decenoyl-[ACP] + H2O. It catalyses the reaction (2E)-decenoyl-[ACP] = (3Z)-decenoyl-[ACP]. Its pathway is lipid metabolism; fatty acid biosynthesis. Necessary for the introduction of cis unsaturation into fatty acids. Catalyzes the dehydration of (3R)-3-hydroxydecanoyl-ACP to E-(2)-decenoyl-ACP and then its isomerization to Z-(3)-decenoyl-ACP. Can catalyze the dehydratase reaction for beta-hydroxyacyl-ACPs with saturated chain lengths up to 16:0, being most active on intermediate chain length. In Escherichia coli O127:H6 (strain E2348/69 / EPEC), this protein is 3-hydroxydecanoyl-[acyl-carrier-protein] dehydratase.